Consider the following 312-residue polypeptide: L-lactate dehydrogenase (312 aa).

NAD(+) contacts are provided by residues Val-11, Asp-32, Arg-37, and 76-77 (GA). Residues Gln-79, Arg-85, and 117-120 (NPVD) contribute to the substrate site. NAD(+)-binding positions include 115–117 (VSN) and Thr-140. Residue 145–148 (DTAR) coordinates substrate. Beta-D-fructose 1,6-bisphosphate is bound by residues Arg-150 and His-165. The Proton acceptor role is filled by His-172. A Phosphotyrosine modification is found at Tyr-217. Thr-226 lines the substrate pocket.

It belongs to the LDH/MDH superfamily. LDH family. Homotetramer.

Its subcellular location is the cytoplasm. The enzyme catalyses (S)-lactate + NAD(+) = pyruvate + NADH + H(+). Its pathway is fermentation; pyruvate fermentation to lactate; (S)-lactate from pyruvate: step 1/1. Allosterically activated by fructose 1,6-bisphosphate (FBP). In terms of biological role, catalyzes the conversion of lactate to pyruvate. In Pseudothermotoga lettingae (strain ATCC BAA-301 / DSM 14385 / NBRC 107922 / TMO) (Thermotoga lettingae), this protein is L-lactate dehydrogenase.